A 248-amino-acid chain; its full sequence is Triosephosphate isomerase (248 aa).

9-11 (NWK) provides a ligand contact to substrate. Histidine 94 functions as the Electrophile in the catalytic mechanism. Glutamate 166 serves as the catalytic Proton acceptor. Residues glycine 172, serine 211, and 232–233 (GG) each bind substrate.

Belongs to the triosephosphate isomerase family. In terms of assembly, homodimer.

The protein resides in the cytoplasm. The enzyme catalyses D-glyceraldehyde 3-phosphate = dihydroxyacetone phosphate. Its pathway is carbohydrate biosynthesis; gluconeogenesis. It functions in the pathway carbohydrate degradation; glycolysis; D-glyceraldehyde 3-phosphate from glycerone phosphate: step 1/1. In terms of biological role, involved in the gluconeogenesis. Catalyzes stereospecifically the conversion of dihydroxyacetone phosphate (DHAP) to D-glyceraldehyde-3-phosphate (G3P). The sequence is that of Triosephosphate isomerase from Herminiimonas arsenicoxydans.